We begin with the raw amino-acid sequence, 820 residues long: DNA replication helicase (820 aa).

G90–T97 lines the ATP pocket.

The protein belongs to the herpesviridae helicase family. In terms of assembly, associates with the primase and the primase-associated factor to form the helicase-primase complex.

It is found in the host nucleus. Functionally, component of the helicase/primase complex. Unwinds the DNA at the replication forks and generates single-stranded DNA for both leading and lagging strand synthesis. The primase synthesizes short RNA primers on the lagging strand that the polymerase elongates using dNTPs. Possesses helicase-like motifs and therefore may act as the helicase subunit of the complex. The sequence is that of DNA replication helicase from Human herpesvirus 7 (strain JI) (HHV-7).